We begin with the raw amino-acid sequence, 327 residues long: MDLYPEENTQSEQSQNSENNMQIFKSENSDGFSSDLMISNDQLKNISKTQLTLEKEKIFKMPNVLSQVMKKAFSRKNEILYCVSTKELSVDIHDATGKVYLPLITREEINKRLSSLKPEVRKIMSMVHLGAVKILLKAQFRNGIDTPIKIALIDDRINSRRDCLLGAAKGNLAYGKFMFTVYPKFGISLNTQRLNQTLSLIHDFENKNLMNKGDKVMTITYIVGYALTNSHHSIDYQSNATIELEDVFQEIGNVQQSDFCTIQNDECNWAIDIAQNKALLGAKTQSQIGNSLQIGNSASSSNTENELARVSQNIDLLKNKLKEICGE.

A coiled-coil region spans residues 297–327 (SASSSNTENELARVSQNIDLLKNKLKEICGE).

It belongs to the caulimoviridae movement protein family. Homotrimer, through the coiled-coil domain. Interacts with VAP. May interact (via N-terminus) with host prenylated Rab acceptor protein 1D (PRA1D).

It is found in the host cell junction. Its subcellular location is the host plasmodesma. Transports viral genome to neighboring plant cells directly through plasmosdesmata, without any budding. The movement protein allows efficient cell to cell propagation, by bypassing the host cell wall barrier. Acts by forming tubules structures that increase the size exclusion limit (SEL) of plasmodesmata, thereby allowing viral ribonucleocapsids to spread directly to neighboring cells. In Cauliflower mosaic virus (strain CM-1841) (CaMV), this protein is Movement protein.